Here is a 336-residue protein sequence, read N- to C-terminus: Ribosomal RNA large subunit methyltransferase F (336 aa).

It belongs to the methyltransferase superfamily. METTL16/RlmF family.

It is found in the cytoplasm. It carries out the reaction adenosine(1618) in 23S rRNA + S-adenosyl-L-methionine = N(6)-methyladenosine(1618) in 23S rRNA + S-adenosyl-L-homocysteine + H(+). Its function is as follows. Specifically methylates the adenine in position 1618 of 23S rRNA. The protein is Ribosomal RNA large subunit methyltransferase F of Yersinia pestis bv. Antiqua (strain Nepal516).